A 627-amino-acid chain; its full sequence is tRNA uridine 5-carboxymethylaminomethyl modification enzyme MnmG (627 aa).

FAD is bound by residues 13–18 (GGGHAG), Val125, and Ser180. An NAD(+)-binding site is contributed by 274 to 288 (GPRYCPSIEDKVVRF). Gln371 is an FAD binding site.

This sequence belongs to the MnmG family. Homodimer. Heterotetramer of two MnmE and two MnmG subunits. The cofactor is FAD.

Its subcellular location is the cytoplasm. In terms of biological role, NAD-binding protein involved in the addition of a carboxymethylaminomethyl (cmnm) group at the wobble position (U34) of certain tRNAs, forming tRNA-cmnm(5)s(2)U34. The chain is tRNA uridine 5-carboxymethylaminomethyl modification enzyme MnmG from Francisella tularensis subsp. tularensis (strain WY96-3418).